Here is a 368-residue protein sequence, read N- to C-terminus: Ethanol acetyltransferase 1 (368 aa).

The N-terminal 21 residues, 1-21 (MFLSLRPSLSVSRLAVVRRAY), are a transit peptide targeting the mitochondrion. The AB hydrolase-1 domain occupies 67 to 171 (PIIFFHGLLG…IIDNAPEPQP (105 aa)). Active-site charge relay system residues include Ser140, Asp164, and His315. Residues 344-368 (RNKDPNNYMQTQNSISNSDTMGQSL) are disordered. Residues 348-368 (PNNYMQTQNSISNSDTMGQSL) are compositionally biased toward polar residues.

It belongs to the AB hydrolase superfamily.

Its subcellular location is the mitochondrion. It catalyses the reaction ethanol + acetyl-CoA = ethyl acetate + CoA. The enzyme catalyses acetyl-CoA + H2O = acetate + CoA + H(+). It carries out the reaction ethyl acetate + H2O = ethanol + acetate + H(+). Its function is as follows. Alcohol acetyltransferase that catalyzes the synthesis of ethyl acetate from ethanol and acetyl-CoA. Can also function as a thioesterase by hydrolyzing acetyl-CoA in the absence of ethanol, as well as esterase hydrolyzing ethyl acetate. This chain is Ethanol acetyltransferase 1 (EAT1), found in Kluyveromyces lactis (strain ATCC 8585 / CBS 2359 / DSM 70799 / NBRC 1267 / NRRL Y-1140 / WM37) (Yeast).